Here is a 328-residue protein sequence, read N- to C-terminus: GMP reductase (328 aa).

Residue Cys-176 is the Thioimidate intermediate of the active site. Residue 205 to 228 (IIADGGIRTHGDIAKSIRFGASMI) participates in NADP(+) binding.

This sequence belongs to the IMPDH/GMPR family. GuaC type 2 subfamily.

It carries out the reaction IMP + NH4(+) + NADP(+) = GMP + NADPH + 2 H(+). Its function is as follows. Catalyzes the irreversible NADPH-dependent deamination of GMP to IMP. It functions in the conversion of nucleobase, nucleoside and nucleotide derivatives of G to A nucleotides, and in maintaining the intracellular balance of A and G nucleotides. The protein is GMP reductase of Streptococcus pneumoniae serotype 2 (strain D39 / NCTC 7466).